A 642-amino-acid chain; its full sequence is Serine/threonine-protein kinase pakA (642 aa).

Composition is skewed to polar residues over residues 1–12 (MSLKKQQQQSDF) and 38–48 (LRQSASFTALN). The segment at 1 to 82 (MSLKKQQQQS…GFGTKPRRKN (82 aa)) is disordered. A CRIB domain is found at 100 to 113 (ISAPENPVHVTHVG). 2 disordered regions span residues 180–276 (GEYP…PIPE) and 317–338 (QLDRSRSQPAAAVARPRPRTRQ). Composition is skewed to low complexity over residues 217 to 227 (SQSSPVPVLSS) and 254 to 266 (VVSNRAPAARPAN). A Protein kinase domain is found at 361 to 612 (YYNLNKIGQG…AHDLLKHPFM (252 aa)). ATP contacts are provided by residues 367–375 (IGQGASGGV) and lysine 390. Aspartate 480 (proton acceptor) is an active-site residue.

Belongs to the protein kinase superfamily. STE Ser/Thr protein kinase family. STE20 subfamily.

Its subcellular location is the cytoplasm. It localises to the nucleus. It catalyses the reaction L-seryl-[protein] + ATP = O-phospho-L-seryl-[protein] + ADP + H(+). The enzyme catalyses L-threonyl-[protein] + ATP = O-phospho-L-threonyl-[protein] + ADP + H(+). Functionally, MAP4K component of the MAPK pathway required for the mating pheromone response and the regulation of cell polarity and cell cycle. This Talaromyces marneffei (Penicillium marneffei) protein is Serine/threonine-protein kinase pakA (pakA).